A 398-amino-acid polypeptide reads, in one-letter code: DNA polymerase IV (398 aa).

The region spanning 5-187 is the UmuC domain; it reads IFLVDMNAFF…LSIKSMHGVG (183 aa). Residues Asp9 and Asp105 each coordinate Mg(2+). The active site involves Glu106.

Belongs to the DNA polymerase type-Y family. In terms of assembly, monomer. Mg(2+) is required as a cofactor.

It is found in the cytoplasm. It catalyses the reaction DNA(n) + a 2'-deoxyribonucleoside 5'-triphosphate = DNA(n+1) + diphosphate. Functionally, poorly processive, error-prone DNA polymerase involved in untargeted mutagenesis. Copies undamaged DNA at stalled replication forks, which arise in vivo from mismatched or misaligned primer ends. These misaligned primers can be extended by PolIV. Exhibits no 3'-5' exonuclease (proofreading) activity. May be involved in translesional synthesis, in conjunction with the beta clamp from PolIII. This chain is DNA polymerase IV, found in Alkaliphilus oremlandii (strain OhILAs) (Clostridium oremlandii (strain OhILAs)).